The sequence spans 357 residues: tRNA-specific 2-thiouridylase MnmA (357 aa).

ATP-binding positions include 10–17 (GISGGVDS) and Ile-36. Residue Cys-98 is the Nucleophile of the active site. Cysteines 98 and 194 form a disulfide. An ATP-binding site is contributed by Gly-122. The interval 144-146 (KDQ) is interaction with tRNA. Cys-194 functions as the Cysteine persulfide intermediate in the catalytic mechanism. Positions 303–304 (RY) are interaction with tRNA.

This sequence belongs to the MnmA/TRMU family.

Its subcellular location is the cytoplasm. The catalysed reaction is S-sulfanyl-L-cysteinyl-[protein] + uridine(34) in tRNA + AH2 + ATP = 2-thiouridine(34) in tRNA + L-cysteinyl-[protein] + A + AMP + diphosphate + H(+). Functionally, catalyzes the 2-thiolation of uridine at the wobble position (U34) of tRNA, leading to the formation of s(2)U34. The chain is tRNA-specific 2-thiouridylase MnmA from Chlorobium phaeovibrioides (strain DSM 265 / 1930) (Prosthecochloris vibrioformis (strain DSM 265)).